We begin with the raw amino-acid sequence, 260 residues long: Small ribosomal subunit protein uS2 (260 aa).

This sequence belongs to the universal ribosomal protein uS2 family.

This is Small ribosomal subunit protein uS2 from Streptococcus gordonii (strain Challis / ATCC 35105 / BCRC 15272 / CH1 / DL1 / V288).